The sequence spans 276 residues: N-alpha-acetyltransferase 60 (276 aa).

The N-acetyltransferase domain occupies 34–239 (VQLRFLVPDD…WTLLDHIKHY (206 aa)). Tyr59 contributes to the substrate binding site. Tyr139 is an active-site residue. Leu141 contacts substrate. Residues 143–145 (LGV) and 151–156 (RNGIGS) each bind acetyl-CoA. The active site involves His180. Acetyl-CoA is bound by residues Asn185 and 192–195 (YEKR). The segment at 204-215 (PYYYNIRGKGKD) is required for homodimerization. Tyr207 is a substrate binding site.

It belongs to the acetyltransferase family. NAA60 subfamily.

It carries out the reaction N-terminal L-methionyl-[transmembrane protein] + acetyl-CoA = N-terminal N(alpha)-acetyl-L-methionyl-[transmembrane protein] + CoA + H(+). The catalysed reaction is L-lysyl-[protein] + acetyl-CoA = N(6)-acetyl-L-lysyl-[protein] + CoA + H(+). Its function is as follows. Displays alpha (N-terminal) acetyltransferase activity towards a range of N-terminal sequences including those starting with Met-Lys, Met-Val, Met-Ala and Met-Met. Required for normal chromosomal segregation during anaphase. Shows histone acetyltransferase activity toward free histones. Functionally, does not show histone acetyltransferase activity toward free histones. This is N-alpha-acetyltransferase 60 from Drosophila melanogaster (Fruit fly).